The primary structure comprises 207 residues: Large ribosomal subunit protein uL4 (207 aa).

It belongs to the universal ribosomal protein uL4 family. As to quaternary structure, part of the 50S ribosomal subunit.

One of the primary rRNA binding proteins, this protein initially binds near the 5'-end of the 23S rRNA. It is important during the early stages of 50S assembly. It makes multiple contacts with different domains of the 23S rRNA in the assembled 50S subunit and ribosome. In terms of biological role, forms part of the polypeptide exit tunnel. In Rickettsia peacockii (strain Rustic), this protein is Large ribosomal subunit protein uL4.